The primary structure comprises 182 residues: A-type ATP synthase subunit E (182 aa).

This sequence belongs to the V-ATPase E subunit family. Has multiple subunits with at least A(3), B(3), C, D, E, F, H, I and proteolipid K(x).

The protein localises to the cell membrane. Component of the A-type ATP synthase that produces ATP from ADP in the presence of a proton gradient across the membrane. In Methanothrix thermoacetophila (strain DSM 6194 / JCM 14653 / NBRC 101360 / PT) (Methanosaeta thermophila), this protein is A-type ATP synthase subunit E.